A 175-amino-acid chain; its full sequence is Peptide methionine sulfoxide reductase MsrA (175 aa).

Cys-12 is a catalytic residue.

The protein belongs to the MsrA Met sulfoxide reductase family.

It catalyses the reaction L-methionyl-[protein] + [thioredoxin]-disulfide + H2O = L-methionyl-(S)-S-oxide-[protein] + [thioredoxin]-dithiol. The enzyme catalyses [thioredoxin]-disulfide + L-methionine + H2O = L-methionine (S)-S-oxide + [thioredoxin]-dithiol. Functionally, has an important function as a repair enzyme for proteins that have been inactivated by oxidation. Catalyzes the reversible oxidation-reduction of methionine sulfoxide in proteins to methionine. The protein is Peptide methionine sulfoxide reductase MsrA of Limosilactobacillus reuteri (strain DSM 20016) (Lactobacillus reuteri).